The sequence spans 495 residues: Glycerol kinase (495 aa).

Residue T11 participates in ADP binding. Positions 11, 12, and 13 each coordinate ATP. T11 provides a ligand contact to sn-glycerol 3-phosphate. Residue R15 participates in ADP binding. Sn-glycerol 3-phosphate is bound by residues R81, E82, Y133, and D242. The glycerol site is built by R81, E82, Y133, D242, and Q243. 2 residues coordinate ADP: T264 and G307. ATP is bound by residues T264, G307, Q311, and G408. G408 and N412 together coordinate ADP.

The protein belongs to the FGGY kinase family.

The enzyme catalyses glycerol + ATP = sn-glycerol 3-phosphate + ADP + H(+). It functions in the pathway polyol metabolism; glycerol degradation via glycerol kinase pathway; sn-glycerol 3-phosphate from glycerol: step 1/1. Inhibited by fructose 1,6-bisphosphate (FBP). In terms of biological role, key enzyme in the regulation of glycerol uptake and metabolism. Catalyzes the phosphorylation of glycerol to yield sn-glycerol 3-phosphate. The chain is Glycerol kinase from Rhodospirillum rubrum (strain ATCC 11170 / ATH 1.1.1 / DSM 467 / LMG 4362 / NCIMB 8255 / S1).